The primary structure comprises 449 residues: 23S rRNA (uracil(1939)-C(5))-methyltransferase RlmD (449 aa).

Residues 15–73 (KAIPAKNLTVTVTSLDPFGQGVARHEGKTVFVTGVLPGEQAEVQLTEDKRQFSHAKLKR) enclose the TRAM domain. Cysteine 86, cysteine 92, cysteine 95, and cysteine 173 together coordinate [4Fe-4S] cluster. Glutamine 276, phenylalanine 305, asparagine 310, glutamate 326, asparagine 353, and aspartate 374 together coordinate S-adenosyl-L-methionine. Cysteine 400 (nucleophile) is an active-site residue.

The protein belongs to the class I-like SAM-binding methyltransferase superfamily. RNA M5U methyltransferase family. RlmD subfamily.

The enzyme catalyses uridine(1939) in 23S rRNA + S-adenosyl-L-methionine = 5-methyluridine(1939) in 23S rRNA + S-adenosyl-L-homocysteine + H(+). Its function is as follows. Catalyzes the formation of 5-methyl-uridine at position 1939 (m5U1939) in 23S rRNA. This Pectobacterium carotovorum subsp. carotovorum (strain PC1) protein is 23S rRNA (uracil(1939)-C(5))-methyltransferase RlmD.